We begin with the raw amino-acid sequence, 146 residues long: UPF0260 protein Swit_2819 (146 aa).

This sequence belongs to the UPF0260 family.

The protein is UPF0260 protein Swit_2819 of Rhizorhabdus wittichii (strain DSM 6014 / CCUG 31198 / JCM 15750 / NBRC 105917 / EY 4224 / RW1) (Sphingomonas wittichii).